The sequence spans 349 residues: Glycerol-3-phosphate dehydrogenase [NAD(+)], cytoplasmic (349 aa).

G10–G15 contributes to the NAD(+) binding site. Substrate is bound at residue K120. NAD(+) is bound at residue A153. A Phosphoserine modification is found at S154. Residue K204 is the Proton acceptor of the active site. R269 contributes to the NAD(+) binding site. R269–N270 contacts substrate. N6-succinyllysine is present on K289. Residues K296 and Q298 each contribute to the NAD(+) site. Y326 carries the phosphotyrosine modification.

Belongs to the NAD-dependent glycerol-3-phosphate dehydrogenase family. As to quaternary structure, homodimer.

The protein localises to the cytoplasm. The enzyme catalyses sn-glycerol 3-phosphate + NAD(+) = dihydroxyacetone phosphate + NADH + H(+). Has glycerol-3-phosphate dehydrogenase activity. The protein is Glycerol-3-phosphate dehydrogenase [NAD(+)], cytoplasmic of Rattus norvegicus (Rat).